The sequence spans 369 residues: UDP-N-acetylglucosamine--N-acetylmuramyl-(pentapeptide) pyrophosphoryl-undecaprenol N-acetylglucosamine transferase (369 aa).

Residues 10-12 (TGG), Asn-124, Arg-166, Ser-196, and Gln-300 contribute to the UDP-N-acetyl-alpha-D-glucosamine site.

The protein belongs to the glycosyltransferase 28 family. MurG subfamily.

The protein localises to the cell membrane. It catalyses the reaction di-trans,octa-cis-undecaprenyl diphospho-N-acetyl-alpha-D-muramoyl-L-alanyl-D-glutamyl-meso-2,6-diaminopimeloyl-D-alanyl-D-alanine + UDP-N-acetyl-alpha-D-glucosamine = di-trans,octa-cis-undecaprenyl diphospho-[N-acetyl-alpha-D-glucosaminyl-(1-&gt;4)]-N-acetyl-alpha-D-muramoyl-L-alanyl-D-glutamyl-meso-2,6-diaminopimeloyl-D-alanyl-D-alanine + UDP + H(+). It functions in the pathway cell wall biogenesis; peptidoglycan biosynthesis. Its function is as follows. Cell wall formation. Catalyzes the transfer of a GlcNAc subunit on undecaprenyl-pyrophosphoryl-MurNAc-pentapeptide (lipid intermediate I) to form undecaprenyl-pyrophosphoryl-MurNAc-(pentapeptide)GlcNAc (lipid intermediate II). The protein is UDP-N-acetylglucosamine--N-acetylmuramyl-(pentapeptide) pyrophosphoryl-undecaprenol N-acetylglucosamine transferase of Desulfitobacterium hafniense (strain DSM 10664 / DCB-2).